Here is a 517-residue protein sequence, read N- to C-terminus: Tyrosine 3-monooxygenase (517 aa).

The residue at position 33 (Ser33) is a Phosphoserine; by PKA. Fe cation contacts are provided by His345, His350, and Glu390.

This sequence belongs to the biopterin-dependent aromatic amino acid hydroxylase family. Requires Fe(2+) as cofactor.

The protein localises to the cytoplasm. The protein resides in the perinuclear region. It localises to the cell projection. Its subcellular location is the axon. It catalyses the reaction (6R)-L-erythro-5,6,7,8-tetrahydrobiopterin + L-tyrosine + O2 = (4aS,6R)-4a-hydroxy-L-erythro-5,6,7,8-tetrahydrobiopterin + L-dopa. The protein operates within catecholamine biosynthesis; dopamine biosynthesis; dopamine from L-tyrosine: step 1/2. Its activity is regulated as follows. Phosphorylation leads to an increase in the catalytic activity. Its function is as follows. Involved in the synthesis of catecholamines, such as dopamine. Has a role in serotonin signaling. Required for normal explorative and foraging behavior. In Caenorhabditis briggsae, this protein is Tyrosine 3-monooxygenase (cat-2).